A 365-amino-acid chain; its full sequence is Cobalt-precorrin-5B C(1)-methyltransferase (365 aa).

The protein belongs to the CbiD family.

The enzyme catalyses Co-precorrin-5B + S-adenosyl-L-methionine = Co-precorrin-6A + S-adenosyl-L-homocysteine. It functions in the pathway cofactor biosynthesis; adenosylcobalamin biosynthesis; cob(II)yrinate a,c-diamide from sirohydrochlorin (anaerobic route): step 6/10. Functionally, catalyzes the methylation of C-1 in cobalt-precorrin-5B to form cobalt-precorrin-6A. This Clostridium perfringens (strain 13 / Type A) protein is Cobalt-precorrin-5B C(1)-methyltransferase.